The following is a 424-amino-acid chain: Serine--tRNA ligase (424 aa).

L-serine is bound at residue 232 to 234 (TAE). 263–265 (RQE) is an ATP binding site. Glutamate 286 is a binding site for L-serine. 350–353 (EIGS) is an ATP binding site. Serine 386 contributes to the L-serine binding site.

It belongs to the class-II aminoacyl-tRNA synthetase family. Type-1 seryl-tRNA synthetase subfamily. In terms of assembly, homodimer. The tRNA molecule binds across the dimer.

It localises to the cytoplasm. The catalysed reaction is tRNA(Ser) + L-serine + ATP = L-seryl-tRNA(Ser) + AMP + diphosphate + H(+). The enzyme catalyses tRNA(Sec) + L-serine + ATP = L-seryl-tRNA(Sec) + AMP + diphosphate + H(+). Its pathway is aminoacyl-tRNA biosynthesis; selenocysteinyl-tRNA(Sec) biosynthesis; L-seryl-tRNA(Sec) from L-serine and tRNA(Sec): step 1/1. Its function is as follows. Catalyzes the attachment of serine to tRNA(Ser). Is also able to aminoacylate tRNA(Sec) with serine, to form the misacylated tRNA L-seryl-tRNA(Sec), which will be further converted into selenocysteinyl-tRNA(Sec). The chain is Serine--tRNA ligase from Aster yellows witches'-broom phytoplasma (strain AYWB).